Reading from the N-terminus, the 608-residue chain is Protein SHQ1 homolog (608 aa).

Disordered stretches follow at residues 487–531 (DAGS…SFYS) and 543–608 (IVYE…ASTT). The span at 489–498 (GSQGSSPQQQ) shows a compositional bias: low complexity. 2 stretches are compositionally biased toward acidic residues: residues 502 to 524 (DDLDLDNDTSGQEDETTTDDESV) and 543 to 579 (IVYEDDEEDEDDDEDGDDDEDGDGDEDEDEDEDEDDS). The segment covering 588-608 (EAEGNSVIEQCSNSETAASTT) has biased composition (polar residues).

It belongs to the SHQ1 family.

In terms of biological role, required for the quantitative accumulation of H/ACA ribonucleoproteins (RNPs). The protein is Protein SHQ1 homolog of Drosophila melanogaster (Fruit fly).